We begin with the raw amino-acid sequence, 172 residues long: Large ribosomal subunit protein uL10 (172 aa).

Belongs to the universal ribosomal protein uL10 family. In terms of assembly, part of the ribosomal stalk of the 50S ribosomal subunit. The N-terminus interacts with L11 and the large rRNA to form the base of the stalk. The C-terminus forms an elongated spine to which L12 dimers bind in a sequential fashion forming a multimeric L10(L12)X complex.

Forms part of the ribosomal stalk, playing a central role in the interaction of the ribosome with GTP-bound translation factors. The chain is Large ribosomal subunit protein uL10 (rplJ) from Chlamydia trachomatis serovar D (strain ATCC VR-885 / DSM 19411 / UW-3/Cx).